The following is a 258-amino-acid chain: 4-hydroxy-tetrahydrodipicolinate reductase (258 aa).

NAD(+) contacts are provided by residues 8–13, 86–88, and 110–113; these read GGSGKM, GTT, and ATNM. Residue H142 is the Proton donor/acceptor of the active site. Residue H143 participates in (S)-2,3,4,5-tetrahydrodipicolinate binding. The Proton donor role is filled by K146. 152–153 is a binding site for (S)-2,3,4,5-tetrahydrodipicolinate; sequence GT.

The protein belongs to the DapB family.

It localises to the cytoplasm. It catalyses the reaction (S)-2,3,4,5-tetrahydrodipicolinate + NAD(+) + H2O = (2S,4S)-4-hydroxy-2,3,4,5-tetrahydrodipicolinate + NADH + H(+). It carries out the reaction (S)-2,3,4,5-tetrahydrodipicolinate + NADP(+) + H2O = (2S,4S)-4-hydroxy-2,3,4,5-tetrahydrodipicolinate + NADPH + H(+). It participates in amino-acid biosynthesis; L-lysine biosynthesis via DAP pathway; (S)-tetrahydrodipicolinate from L-aspartate: step 4/4. Functionally, catalyzes the conversion of 4-hydroxy-tetrahydrodipicolinate (HTPA) to tetrahydrodipicolinate. This is 4-hydroxy-tetrahydrodipicolinate reductase from Campylobacter hominis (strain ATCC BAA-381 / DSM 21671 / CCUG 45161 / LMG 19568 / NCTC 13146 / CH001A).